Here is a 508-residue protein sequence, read N- to C-terminus: Probable cytosol aminopeptidase (508 aa).

2 residues coordinate Mn(2+): Lys-274 and Asp-279. The active site involves Lys-286. 3 residues coordinate Mn(2+): Asp-297, Asp-356, and Glu-358. Arg-360 is a catalytic residue.

The protein belongs to the peptidase M17 family. Requires Mn(2+) as cofactor.

The protein resides in the cytoplasm. The catalysed reaction is Release of an N-terminal amino acid, Xaa-|-Yaa-, in which Xaa is preferably Leu, but may be other amino acids including Pro although not Arg or Lys, and Yaa may be Pro. Amino acid amides and methyl esters are also readily hydrolyzed, but rates on arylamides are exceedingly low.. It catalyses the reaction Release of an N-terminal amino acid, preferentially leucine, but not glutamic or aspartic acids.. In terms of biological role, presumably involved in the processing and regular turnover of intracellular proteins. Catalyzes the removal of unsubstituted N-terminal amino acids from various peptides. The sequence is that of Probable cytosol aminopeptidase from Paraburkholderia xenovorans (strain LB400).